The chain runs to 686 residues: Probable metal-nicotianamine transporter YSL10 (686 aa).

14 helical membrane-spanning segments follow: residues 36–56, 60–80, 109–129, 151–171, 212–232, 271–291, 316–336, 383–403, 415–435, 461–481, 501–521, 556–576, 597–617, and 639–659; these read VTLR…VIVM, LTTG…FFLL, CVVA…IFAM, LGWM…SVVP, MLGK…FYTG, LVNI…WPLI, VFIS…KVMT, IPNW…IATV, VAVS…GCGL, GGII…STAS, FVSQ…VFWL, GSLP…AIAV, MAIP…GSLI, and GLIC…LAGV.

This sequence belongs to the YSL (TC 2.A.67.2) family.

The protein localises to the membrane. Its function is as follows. May be involved in the transport of nicotianamine-chelated metals. This chain is Probable metal-nicotianamine transporter YSL10 (YSL10), found in Oryza sativa subsp. japonica (Rice).